The sequence spans 346 residues: MAAGLDRDKALDNALAQIDKAFGKGSVMRLGDDTRPPIQAIPTGSIALDVALGIGGLPKGRVIEIYGPESSGKTTVALHAVANAQAAGGIAAFIDAEHALDPEYAGKLGVDIDNLLVSQPDTGEQALEIADMLVRSGALDIIVIDSVAALVPRAEIEGEMGDSHVGLQARLMSQALRKMTAALANSGTTAIFINQLREKIGVMFGSPETTTGGKALKFYASVRLDVRRIETLKDGTEAVGNRTRVKVVKNKVAPPFRTAEFDIVYGGGISREGSLIDMGVEHGIIRKSGAWYTYDGDQLGQGKENARSFLRDNPDLANEIEKKIKEKLGILPSVESDAVAPVPIDL.

67–74 contributes to the ATP binding site; it reads GPESSGKT.

This sequence belongs to the RecA family.

It is found in the cytoplasm. Can catalyze the hydrolysis of ATP in the presence of single-stranded DNA, the ATP-dependent uptake of single-stranded DNA by duplex DNA, and the ATP-dependent hybridization of homologous single-stranded DNAs. It interacts with LexA causing its activation and leading to its autocatalytic cleavage. The polypeptide is Protein RecA (Frankia alni (strain DSM 45986 / CECT 9034 / ACN14a)).